The primary structure comprises 80 residues: Large ribosomal subunit protein bL31B (80 aa).

Belongs to the bacterial ribosomal protein bL31 family. Type B subfamily. Part of the 50S ribosomal subunit.

This Streptococcus sanguinis (strain SK36) protein is Large ribosomal subunit protein bL31B.